The chain runs to 479 residues: UDP-N-acetylmuramate--L-alanine ligase (479 aa).

Glycine 114 to threonine 120 serves as a coordination point for ATP.

The protein belongs to the MurCDEF family.

Its subcellular location is the cytoplasm. The enzyme catalyses UDP-N-acetyl-alpha-D-muramate + L-alanine + ATP = UDP-N-acetyl-alpha-D-muramoyl-L-alanine + ADP + phosphate + H(+). Its pathway is cell wall biogenesis; peptidoglycan biosynthesis. Its function is as follows. Cell wall formation. This is UDP-N-acetylmuramate--L-alanine ligase from Pelodictyon phaeoclathratiforme (strain DSM 5477 / BU-1).